The following is a 207-amino-acid chain: Large ribosomal subunit protein uL4 (207 aa).

Residues 48–75 (THSVKNRSAVRGGGRKPWRQKGTGRARQ) are disordered. Basic residues predominate over residues 60 to 71 (GGRKPWRQKGTG).

Belongs to the universal ribosomal protein uL4 family. In terms of assembly, part of the 50S ribosomal subunit.

Functionally, one of the primary rRNA binding proteins, this protein initially binds near the 5'-end of the 23S rRNA. It is important during the early stages of 50S assembly. It makes multiple contacts with different domains of the 23S rRNA in the assembled 50S subunit and ribosome. In terms of biological role, forms part of the polypeptide exit tunnel. This chain is Large ribosomal subunit protein uL4, found in Staphylococcus carnosus (strain TM300).